The following is a 281-amino-acid chain: ATP synthase subunit a (281 aa).

Helical transmembrane passes span 56–76, 117–137, 144–164, 181–201, 215–235, 237–257, and 259–279; these read KPML…WAAF, LVVS…IPVA, IIAY…TLTF, KSLG…NILI, FAGH…LNGV, IAYA…ELFI, and ALQA…AMAE.

Belongs to the ATPase A chain family. As to quaternary structure, F-type ATPases have 2 components, CF(1) - the catalytic core - and CF(0) - the membrane proton channel. CF(1) has five subunits: alpha(3), beta(3), gamma(1), delta(1), epsilon(1). CF(0) has three main subunits: a(1), b(2) and c(9-12). The alpha and beta chains form an alternating ring which encloses part of the gamma chain. CF(1) is attached to CF(0) by a central stalk formed by the gamma and epsilon chains, while a peripheral stalk is formed by the delta and b chains.

The protein resides in the cell membrane. Functionally, key component of the proton channel; it plays a direct role in the translocation of protons across the membrane. The sequence is that of ATP synthase subunit a from Streptomyces lividans.